A 179-amino-acid chain; its full sequence is Large ribosomal subunit protein uL6 (179 aa).

It belongs to the universal ribosomal protein uL6 family. In terms of assembly, part of the 50S ribosomal subunit.

This protein binds to the 23S rRNA, and is important in its secondary structure. It is located near the subunit interface in the base of the L7/L12 stalk, and near the tRNA binding site of the peptidyltransferase center. This is Large ribosomal subunit protein uL6 from Trichlorobacter lovleyi (strain ATCC BAA-1151 / DSM 17278 / SZ) (Geobacter lovleyi).